Reading from the N-terminus, the 1102-residue chain is Avirulence protein AvrXa10 (1102 aa).

2 disordered regions span residues 1 to 68 (MDPI…SAGS) and 127 to 151 (ARPPRAKPAPRRRAAQPSDASPAAQ). A compositionally biased stretch (basic residues) spans 130-140 (PRAKPAPRRRA). The segment covering 141 to 151 (AQPSDASPAAQ) has biased composition (low complexity). Core repeat repeat units lie at residues 288-321 (LTPDQVVAIASNIGGNQALETVQRLLPVLCQAHG), 322-355 (LTPDQVVAIASHGGGKQALETVQRLLPVLCQAHG), 356-389 (LTPDQVVAIASNIGGKQALATVQRLLPVLCQDHG), 390-423 (LTPDQVVAIASHGGGKQALETVQRLLPVLCQDHG), 424-457 (LTPDQVVAIASNIGGKQALETVQRLLPVLCQDHG), 458-491 (LTPDQVVAIASNIGGKQALETVQRLLPVLCQDHG), 492-525 (LTPDQVVAIASNNGGKQALETVQRLLPVLCQTHG), 526-559 (LTPDQVVAIANHDGGKQALETVQRLLPVLCQDHG), 560-593 (LTPDQVVAIASNIGGKQALATVQRLLPVLCQAHG), 594-627 (LTPDQVVAIASHDGGKQALETVQRLLPVLCQDHG), 628-661 (LTPDQVVAIASNNGGKQALETVQRLLPVLCQDHG), 662-695 (LTPAQVVAIANHGGGKQALETVQRLLPVLCQDHG), 696-729 (LTPVQVVAIASNSGGKQALETVQRLLPVLCQDHG), 730-763 (LTPVQVVAIASNGGGKQALATVQRLLPVLCQDHG), and 764-797 (LTPVQVVAIASHDGGKQALETVQRLLPVLCQDHG). A Core repeat 15.5 repeat occupies 798–809 (LTPDQVVAIASN). The Nuclear localization sequence A (NLSA) motif lies at 951-954 (KRVK). Residues 978–990 (DLDAPSPMHEGDQ) show a composition bias toward basic and acidic residues. A disordered region spans residues 978–1021 (DLDAPSPMHEGDQTRASSRKRSRSDRAVTGPSTQQSFEVRVPEQ). The Nuclear localization sequence B (NLSB) signature appears at 997-1000 (KRSR). The short motif at 1034–1037 (KRPR) is the Nuclear localization sequence C (NLSC) element. The segment at 1063-1093 (WEQDAAPFAGAADDFPAFNEEELAWLMELLP) is activation domain.

The protein belongs to the transcription activator-like effector (TALE) family.

The protein localises to the secreted. Its subcellular location is the host nucleus. Functionally, avirulence protein. Induces the hypersensitive response (HR)in rice plants carrying the resistance gene Xa10. Activity depends on the presence of the core repeat domains; replacement with repeat domains from other proteins (AvrBs3 of X.euvesicatoria (AC P14727) or AvrXa7 of this organism) does not elicit the HR. Probably acts as a transcription factor in its host plant (rice) to induce plant resistance or disease. The polypeptide is Avirulence protein AvrXa10 (Xanthomonas oryzae pv. oryzae).